A 72-amino-acid chain; its full sequence is uncharacterized protein (72 aa).

The segment at 1 to 53 is disordered; the sequence is MTNEPSTSTPTSTSTSTSTSTSTSTTTLTSTSSTPTSTSTSTSTSTSTSTSTS.

This is an uncharacterized protein from Dictyostelium discoideum (Social amoeba).